The primary structure comprises 126 residues: Holo-[acyl-carrier-protein] synthase (126 aa).

Mg(2+)-binding residues include aspartate 9 and glutamate 58.

This sequence belongs to the P-Pant transferase superfamily. AcpS family. Requires Mg(2+) as cofactor.

The protein localises to the cytoplasm. It carries out the reaction apo-[ACP] + CoA = holo-[ACP] + adenosine 3',5'-bisphosphate + H(+). Functionally, transfers the 4'-phosphopantetheine moiety from coenzyme A to a Ser of acyl-carrier-protein. The protein is Holo-[acyl-carrier-protein] synthase of Serratia proteamaculans (strain 568).